The chain runs to 336 residues: Ornithine carbamoyltransferase, catabolic (336 aa).

Carbamoyl phosphate contacts are provided by residues 57-60, glutamine 84, arginine 108, and 135-138; these read STRT and HPTQ. Residues asparagine 169, aspartate 233, and 237-238 contribute to the L-ornithine site; that span reads SM. Carbamoyl phosphate is bound by residues 275 to 276 and arginine 322; that span reads CL.

The protein belongs to the aspartate/ornithine carbamoyltransferase superfamily. OTCase family.

The protein localises to the cytoplasm. It carries out the reaction carbamoyl phosphate + L-ornithine = L-citrulline + phosphate + H(+). It participates in amino-acid degradation; L-arginine degradation via ADI pathway; carbamoyl phosphate from L-arginine: step 2/2. Functionally, reversibly catalyzes the transfer of the carbamoyl group from carbamoyl phosphate (CP) to the N(epsilon) atom of ornithine (ORN) to produce L-citrulline. The chain is Ornithine carbamoyltransferase, catabolic from Photobacterium profundum (strain SS9).